The primary structure comprises 75 residues: Large ribosomal subunit protein eL14 (75 aa).

Belongs to the eukaryotic ribosomal protein eL14 family.

The polypeptide is Large ribosomal subunit protein eL14 (Methanothermobacter thermautotrophicus (strain ATCC 29096 / DSM 1053 / JCM 10044 / NBRC 100330 / Delta H) (Methanobacterium thermoautotrophicum)).